The following is a 504-amino-acid chain: MADINPRQSDTSKFPDPVYKETVLRPLFDGAKNHHVDGFRRIDRAHLVMLRETGILDAETAAKIAGALEDIDRTIEPSELVYTGEVEDFFFLIEKELKARIGVDVAGRLHTARSRNDIDHTLFKIGLKDKIDTLTAKARVLLKALIDAAERNQSTLIVAYTHGQPAQPTTFGHYLSAAIEVLIRDIERFTEARHIVDLSPMGAAAITTSGFPIDRARVAELLGFAAPLRNSYSCIAAVDYTTATYGAIELMFLHLGRLIQDFQFWTSFEVGQIYVPNSLVQISSIMPQKRNPVPIEHLRHLASQTFGRARTMLDVMHNTPFTDMNDSEGETQSMGYEAFASAGRVLDLLASLVGQISIDPERVDQNIRRSCITITELADSLVRIEDLSFRQAHEIAATVAKSVVALKGDLPNDGYQPFLGAFSGLTGRETGIDEEKFRQIVSPEHFVAVRSRFGGPAPEPMREAFAAYRGKLGAFEAEAQRSTNHEAAKAAELAEKFTALTGAR.

This sequence belongs to the lyase 1 family. Argininosuccinate lyase subfamily.

It localises to the cytoplasm. The catalysed reaction is 2-(N(omega)-L-arginino)succinate = fumarate + L-arginine. It functions in the pathway amino-acid biosynthesis; L-arginine biosynthesis; L-arginine from L-ornithine and carbamoyl phosphate: step 3/3. The polypeptide is Argininosuccinate lyase 2 (Agrobacterium fabrum (strain C58 / ATCC 33970) (Agrobacterium tumefaciens (strain C58))).